Consider the following 428-residue polypeptide: 3-phosphoshikimate 1-carboxyvinyltransferase (428 aa).

Positions 22, 23, and 27 each coordinate 3-phosphoshikimate. Residue Lys-22 coordinates phosphoenolpyruvate. Phosphoenolpyruvate-binding residues include Gly-96 and Arg-124. Residues Ser-169, Ser-170, Gln-171, Ser-197, Asp-313, Asn-336, and Lys-340 each coordinate 3-phosphoshikimate. Residue Gln-171 participates in phosphoenolpyruvate binding. Residue Asp-313 is the Proton acceptor of the active site. The phosphoenolpyruvate site is built by Arg-344, Arg-386, and Lys-411.

The protein belongs to the EPSP synthase family. Monomer.

It localises to the cytoplasm. The catalysed reaction is 3-phosphoshikimate + phosphoenolpyruvate = 5-O-(1-carboxyvinyl)-3-phosphoshikimate + phosphate. Its pathway is metabolic intermediate biosynthesis; chorismate biosynthesis; chorismate from D-erythrose 4-phosphate and phosphoenolpyruvate: step 6/7. Functionally, catalyzes the transfer of the enolpyruvyl moiety of phosphoenolpyruvate (PEP) to the 5-hydroxyl of shikimate-3-phosphate (S3P) to produce enolpyruvyl shikimate-3-phosphate and inorganic phosphate. This is 3-phosphoshikimate 1-carboxyvinyltransferase from Xenorhabdus nematophila (strain ATCC 19061 / DSM 3370 / CCUG 14189 / LMG 1036 / NCIMB 9965 / AN6).